The chain runs to 501 residues: Ammonium transporter 2 member 2 (501 aa).

Transmembrane regions (helical) follow at residues V35–I55, S64–F84, L140–L160, L174–Y194, G203–G223, I238–G258, T274–G294, V298–L318, W322–L342, L356–L376, and F412–I432.

The protein belongs to the ammonia transporter channel (TC 1.A.11.2) family.

It is found in the membrane. Involved in ammonium transport. This chain is Ammonium transporter 2 member 2 (AMT2-2), found in Oryza sativa subsp. japonica (Rice).